The primary structure comprises 244 residues: 1-(5-phosphoribosyl)-5-[(5-phosphoribosylamino)methylideneamino] imidazole-4-carboxamide isomerase (244 aa).

The active-site Proton acceptor is the D10. The Proton donor role is filled by D129.

The protein belongs to the HisA/HisF family.

The protein resides in the cytoplasm. It catalyses the reaction 1-(5-phospho-beta-D-ribosyl)-5-[(5-phospho-beta-D-ribosylamino)methylideneamino]imidazole-4-carboxamide = 5-[(5-phospho-1-deoxy-D-ribulos-1-ylimino)methylamino]-1-(5-phospho-beta-D-ribosyl)imidazole-4-carboxamide. It functions in the pathway amino-acid biosynthesis; L-histidine biosynthesis; L-histidine from 5-phospho-alpha-D-ribose 1-diphosphate: step 4/9. The polypeptide is 1-(5-phosphoribosyl)-5-[(5-phosphoribosylamino)methylideneamino] imidazole-4-carboxamide isomerase (Rhodococcus erythropolis (strain PR4 / NBRC 100887)).